Reading from the N-terminus, the 923-residue chain is DNA mismatch repair protein MutS (923 aa).

671–678 serves as a coordination point for ATP; it reads GPNMAGKS.

This sequence belongs to the DNA mismatch repair MutS family.

Functionally, this protein is involved in the repair of mismatches in DNA. It is possible that it carries out the mismatch recognition step. This protein has a weak ATPase activity. The polypeptide is DNA mismatch repair protein MutS (Rhodopseudomonas palustris (strain BisB5)).